The sequence spans 628 residues: Biosynthetic arginine decarboxylase (628 aa).

Residue lysine 99 is modified to N6-(pyridoxal phosphate)lysine. A substrate-binding site is contributed by valine 279–tyrosine 289.

Belongs to the Orn/Lys/Arg decarboxylase class-II family. SpeA subfamily. Mg(2+) is required as a cofactor. Requires pyridoxal 5'-phosphate as cofactor.

It carries out the reaction L-arginine + H(+) = agmatine + CO2. Its pathway is amine and polyamine biosynthesis; agmatine biosynthesis; agmatine from L-arginine: step 1/1. Functionally, catalyzes the biosynthesis of agmatine from arginine. In Xylella fastidiosa (strain M23), this protein is Biosynthetic arginine decarboxylase.